Reading from the N-terminus, the 563-residue chain is Phosphomethylpyrimidine synthase (563 aa).

The interval P95–S115 is disordered. Residues N200, M229, Y258, H294, S314–G316, D355–R358, and E394 each bind substrate. Residue H398 coordinates Zn(2+). Y421 is a substrate binding site. H462 lines the Zn(2+) pocket. C544, C547, and C552 together coordinate [4Fe-4S] cluster.

This sequence belongs to the ThiC family. [4Fe-4S] cluster is required as a cofactor.

The enzyme catalyses 5-amino-1-(5-phospho-beta-D-ribosyl)imidazole + S-adenosyl-L-methionine = 4-amino-2-methyl-5-(phosphooxymethyl)pyrimidine + CO + 5'-deoxyadenosine + formate + L-methionine + 3 H(+). Its pathway is cofactor biosynthesis; thiamine diphosphate biosynthesis. Catalyzes the synthesis of the hydroxymethylpyrimidine phosphate (HMP-P) moiety of thiamine from aminoimidazole ribotide (AIR) in a radical S-adenosyl-L-methionine (SAM)-dependent reaction. In Chlorobium phaeobacteroides (strain BS1), this protein is Phosphomethylpyrimidine synthase.